We begin with the raw amino-acid sequence, 201 residues long: Prostamide/prostaglandin F synthase (201 aa).

This sequence belongs to the peroxiredoxin-like PRXL2 family. Prostamide/prostaglandin F synthase subfamily.

It localises to the cytoplasm. It is found in the cytosol. The catalysed reaction is prostaglandin H2 + [thioredoxin]-dithiol = prostaglandin F2alpha + [thioredoxin]-disulfide. It carries out the reaction prostamide F2alpha + [thioredoxin]-disulfide = prostamide H2 + [thioredoxin]-dithiol. Its function is as follows. Catalyzes the reduction of prostaglandin-ethanolamide H(2) (prostamide H(2)) to prostamide F(2alpha) with NADPH as proton donor. Also able to reduce prostaglandin H(2) to prostaglandin F(2alpha). The chain is Prostamide/prostaglandin F synthase (prxl2b) from Xenopus laevis (African clawed frog).